A 221-amino-acid polypeptide reads, in one-letter code: Epididymal secretory glutathione peroxidase (221 aa).

The first 21 residues, 1-21 (MVTELRVFYLVPLLLASYVQT), serve as a signal peptide directing secretion. Cys-73 is an active-site residue.

This sequence belongs to the glutathione peroxidase family. As to expression, epididymis.

Its subcellular location is the secreted. The enzyme catalyses 2 glutathione + H2O2 = glutathione disulfide + 2 H2O. Its function is as follows. Protects cells and enzymes from oxidative damage, by catalyzing the reduction of hydrogen peroxide, lipid peroxides and organic hydroperoxide, by glutathione. May constitute a glutathione peroxidase-like protective system against peroxide damage in sperm membrane lipids. This is Epididymal secretory glutathione peroxidase (Gpx5) from Mus musculus (Mouse).